The sequence spans 341 residues: Arfaptin-2 (341 aa).

The segment at 46-84 (NETSIVSGGYGGSGDGLIPTGSGRHPSHSTSPSGPGDEV) is disordered. A compositionally biased stretch (low complexity) spans 65–81 (TGSGRHPSHSTSPSGPG). Residue serine 72 is modified to Phosphoserine. One can recognise an AH domain in the interval 121 to 321 (TVDLELELQI…NQKQLEQTLQ (201 aa)).

As to quaternary structure, forms homodimers or heterodimers with ARFIP1. Interacts with RAC1. Specifically binds to GTP-bound ARF1 and ARF6, but binds to RAC1.GTP and RAC1.GDP with similar affinities. Interacts with ARL1. Interacts (via N-terminus) with IKBKB and IKBKG; these interactions inhibit activation of NF-kappa-B.

It localises to the golgi apparatus. It is found in the trans-Golgi network membrane. Plays a role in constitutive metalloproteinase (MMP) secretion from the trans Golgi network. May have important functions during vesicle biogenesis at certain cargo subdomains, which could be predominantly utilized by secreted MMPs, such as MMP7 and MMP2. Also involved in autophagy by regulating the starvation-dependent trafficking of ATG9A vesicles which deliver the phosphatidylinositol 4-kinase beta (PI4KB) to the autophagosome initiation site. Involved in phagophore growth during mitophagy by regulating ATG9A trafficking to mitochondria. In addition, plays a role in NF-kappa-B inhibition by interacting with IKBKB and IKBKG. This chain is Arfaptin-2, found in Mus musculus (Mouse).